Consider the following 349-residue polypeptide: Protein RecA (349 aa).

Residue 69–76 (GPESSGKT) coordinates ATP.

Belongs to the RecA family.

The protein resides in the cytoplasm. Its function is as follows. Can catalyze the hydrolysis of ATP in the presence of single-stranded DNA, the ATP-dependent uptake of single-stranded DNA by duplex DNA, and the ATP-dependent hybridization of homologous single-stranded DNAs. It interacts with LexA causing its activation and leading to its autocatalytic cleavage. This chain is Protein RecA, found in Crocosphaera subtropica (strain ATCC 51142 / BH68) (Cyanothece sp. (strain ATCC 51142)).